We begin with the raw amino-acid sequence, 144 residues long: Large ribosomal subunit protein uL13 (144 aa).

It belongs to the universal ribosomal protein uL13 family. Part of the 50S ribosomal subunit.

This protein is one of the early assembly proteins of the 50S ribosomal subunit, although it is not seen to bind rRNA by itself. It is important during the early stages of 50S assembly. In Chloroflexus aurantiacus (strain ATCC 29366 / DSM 635 / J-10-fl), this protein is Large ribosomal subunit protein uL13.